Here is a 272-residue protein sequence, read N- to C-terminus: Putative hydro-lyase Rpal_1947 (272 aa).

This sequence belongs to the D-glutamate cyclase family.

This Rhodopseudomonas palustris (strain TIE-1) protein is Putative hydro-lyase Rpal_1947.